Reading from the N-terminus, the 503-residue chain is Protein FAM124A (503 aa).

Residues 434–470 (LAQSDTVPGRQNHSSDSLHSVSDISSSPCPVFPSTPA) form a disordered region. Residues 436–445 (QSDTVPGRQN) are compositionally biased toward polar residues. A compositionally biased stretch (low complexity) spans 447–460 (SSDSLHSVSDISSS).

This sequence belongs to the FAM124 family.

This chain is Protein FAM124A (fam124a), found in Xenopus tropicalis (Western clawed frog).